The primary structure comprises 195 residues: MIVEPTVATYNTSDFRKGLKVQIDGEPYLITEMNFVKPGKGNAMYKCKMKNLIRGTTLDRTYKGGDSLEAADVETTTVQFLYRQGQDYVFMDGTTFEQYEVPNEVAGDIWKYLKDGTECSMTLYNGAAIIVEPPQHVQLEVTECGPGTKGDTATNVTKPAMVETGAEFNVPGFIKEGNIIKINTLNNEYVERVNN.

This sequence belongs to the elongation factor P family.

It localises to the cytoplasm. Its pathway is protein biosynthesis; polypeptide chain elongation. Its function is as follows. Involved in peptide bond synthesis. Stimulates efficient translation and peptide-bond synthesis on native or reconstituted 70S ribosomes in vitro. Probably functions indirectly by altering the affinity of the ribosome for aminoacyl-tRNA, thus increasing their reactivity as acceptors for peptidyl transferase. The chain is Elongation factor P from Rhodopirellula baltica (strain DSM 10527 / NCIMB 13988 / SH1).